The sequence spans 178 residues: Cytidylate kinase 2 (178 aa).

Residue 7 to 15 (GKSGCGNTT) coordinates ATP.

Belongs to the cytidylate kinase family. Type 2 subfamily.

It localises to the cytoplasm. It carries out the reaction CMP + ATP = CDP + ADP. It catalyses the reaction dCMP + ATP = dCDP + ADP. The polypeptide is Cytidylate kinase 2 (Borrelia garinii subsp. bavariensis (strain ATCC BAA-2496 / DSM 23469 / PBi) (Borreliella bavariensis)).